The following is a 363-amino-acid chain: Dihydroorotate dehydrogenase (quinone) (363 aa).

FMN is bound by residues 62 to 66 and Thr86; that span reads AGFDK. Lys66 is a binding site for substrate. 111–115 contacts substrate; that stretch reads NRMGF. Positions 142 and 175 each coordinate FMN. Asn175 contacts substrate. The active-site Nucleophile is Ser178. Asn180 lines the substrate pocket. FMN is bound by residues Lys216 and Thr244. Residue 245–246 participates in substrate binding; it reads NT. FMN is bound by residues Gly267, Gly296, and 317–318; that span reads YT.

The protein belongs to the dihydroorotate dehydrogenase family. Type 2 subfamily. Monomer. The cofactor is FMN.

The protein resides in the cell membrane. The catalysed reaction is (S)-dihydroorotate + a quinone = orotate + a quinol. Its pathway is pyrimidine metabolism; UMP biosynthesis via de novo pathway; orotate from (S)-dihydroorotate (quinone route): step 1/1. Catalyzes the conversion of dihydroorotate to orotate with quinone as electron acceptor. The sequence is that of Dihydroorotate dehydrogenase (quinone) from Anaeromyxobacter sp. (strain Fw109-5).